A 438-amino-acid polypeptide reads, in one-letter code: Shikimate transporter (438 aa).

12 consecutive transmembrane segments (helical) span residues 28 to 48 (FAGA…AALV), 64 to 84 (LAAF…GVIF), 109 to 129 (ALIG…ILLV), 133 to 153 (AIQG…SVES), 168 to 188 (VGYG…SMMT), 193 to 213 (FLSW…LGAL), 255 to 275 (IIAL…FALN), 287 to 307 (LFLN…PCFA), 318 to 337 (VYIT…FMAL), 341 to 363 (SIFW…VVCV), 387 to 407 (VASV…ITYF), and 411 to 431 (WHSV…TALL).

It belongs to the major facilitator superfamily. Metabolite:H+ Symporter (MHS) family (TC 2.A.1.6) family.

It is found in the cell inner membrane. It carries out the reaction shikimate(in) + H(+)(in) = shikimate(out) + H(+)(out). Involved in the uptake of shikimate, an intermediate in the aromatic amino acid biosynthetic pathway. The polypeptide is Shikimate transporter (Escherichia coli (strain K12)).